Reading from the N-terminus, the 98-residue chain is Small ribosomal subunit protein bS6 (98 aa).

This sequence belongs to the bacterial ribosomal protein bS6 family.

Binds together with bS18 to 16S ribosomal RNA. The protein is Small ribosomal subunit protein bS6 of Lacticaseibacillus paracasei (strain ATCC 334 / BCRC 17002 / CCUG 31169 / CIP 107868 / KCTC 3260 / NRRL B-441) (Lactobacillus paracasei).